The sequence spans 601 residues: Sulfite reductase [NADPH] flavoprotein alpha-component (601 aa).

The Flavodoxin-like domain maps to 64-202; that stretch reads ITLISASQTG…AAAEWRARIV (139 aa). Residues 70-75, 117-120, and 153-162 contribute to the FMN site; these read SQTGNA, STQG, and LGDTSYEFFC. The region spanning 236-450 is the FAD-binding FR-type domain; sequence EEPLVASLSV…IEHNDNFRLP (215 aa). Residues Thr-324, Ala-358, 388–391, 406–408, and 421–424 contribute to the FAD site; these read RLYS, TVG, and GGAS. NADP(+)-binding positions include 521 to 522, 527 to 531, and Asp-563; these read SR and KIYVQ. Residue Tyr-601 participates in FAD binding.

It belongs to the NADPH-dependent sulphite reductase flavoprotein subunit CysJ family. This sequence in the N-terminal section; belongs to the flavodoxin family. In the C-terminal section; belongs to the flavoprotein pyridine nucleotide cytochrome reductase family. In terms of assembly, alpha(8)-beta(8). The alpha component is a flavoprotein, the beta component is a hemoprotein. Requires FAD as cofactor. The cofactor is FMN.

The enzyme catalyses hydrogen sulfide + 3 NADP(+) + 3 H2O = sulfite + 3 NADPH + 4 H(+). It functions in the pathway sulfur metabolism; hydrogen sulfide biosynthesis; hydrogen sulfide from sulfite (NADPH route): step 1/1. In terms of biological role, component of the sulfite reductase complex that catalyzes the 6-electron reduction of sulfite to sulfide. This is one of several activities required for the biosynthesis of L-cysteine from sulfate. The flavoprotein component catalyzes the electron flow from NADPH -&gt; FAD -&gt; FMN to the hemoprotein component. The protein is Sulfite reductase [NADPH] flavoprotein alpha-component of Enterobacter sp. (strain 638).